The chain runs to 89 residues: Small ribosomal subunit protein uS15 (89 aa).

A disordered region spans residues 1–22 (MPLSKEQKQEVMEKYKLHEHDT).

The protein belongs to the universal ribosomal protein uS15 family. Part of the 30S ribosomal subunit. Forms a bridge to the 50S subunit in the 70S ribosome, contacting the 23S rRNA.

Its function is as follows. One of the primary rRNA binding proteins, it binds directly to 16S rRNA where it helps nucleate assembly of the platform of the 30S subunit by binding and bridging several RNA helices of the 16S rRNA. In terms of biological role, forms an intersubunit bridge (bridge B4) with the 23S rRNA of the 50S subunit in the ribosome. The sequence is that of Small ribosomal subunit protein uS15 from Natranaerobius thermophilus (strain ATCC BAA-1301 / DSM 18059 / JW/NM-WN-LF).